The primary structure comprises 578 residues: Proline--tRNA ligase (578 aa).

This sequence belongs to the class-II aminoacyl-tRNA synthetase family. ProS type 1 subfamily. In terms of assembly, homodimer.

It is found in the cytoplasm. The catalysed reaction is tRNA(Pro) + L-proline + ATP = L-prolyl-tRNA(Pro) + AMP + diphosphate. Catalyzes the attachment of proline to tRNA(Pro) in a two-step reaction: proline is first activated by ATP to form Pro-AMP and then transferred to the acceptor end of tRNA(Pro). As ProRS can inadvertently accommodate and process non-cognate amino acids such as alanine and cysteine, to avoid such errors it has two additional distinct editing activities against alanine. One activity is designated as 'pretransfer' editing and involves the tRNA(Pro)-independent hydrolysis of activated Ala-AMP. The other activity is designated 'posttransfer' editing and involves deacylation of mischarged Ala-tRNA(Pro). The misacylated Cys-tRNA(Pro) is not edited by ProRS. This is Proline--tRNA ligase from Burkholderia lata (strain ATCC 17760 / DSM 23089 / LMG 22485 / NCIMB 9086 / R18194 / 383).